A 205-amino-acid chain; its full sequence is Recombination protein RecR (205 aa).

Residues 58-75 (CSECQNVTDRDSDPCVLC) form a C4-type zinc finger. The Toprim domain maps to 83 to 182 (TVICVVESPV…AVSKIARGIP (100 aa)).

This sequence belongs to the RecR family.

Its function is as follows. May play a role in DNA repair. It seems to be involved in an RecBC-independent recombinational process of DNA repair. It may act with RecF and RecO. In Chlorobium phaeobacteroides (strain DSM 266 / SMG 266 / 2430), this protein is Recombination protein RecR.